The following is a 492-amino-acid chain: MTSLTLYLIIFSIILYLFVNRNKRKNLKIPGPNGIPIFGNLLSLSGEMHLTLQEWYKTYGSVFSIRMGNIDTVVLTEYPTIRKAFVDNSLAFASRYQLKSRVVLTGAKDLAIQNGEIHSLLKKVVLSEMTTTKIKRMEIHIIKETEKILKILDKHAERGEPFIINNYLNMFSMNVILRFLLGIDYPYENVDETVGYVKSIKSFFAVAGLPILSDFIPIPLKKSGVFFDSYKELEIETDKLIEKFKKSRNEKIENGTYNEEEDESILSKLLKEYEHGNITWECVSHTCIDIISAGTDTSANTLVMALIELINNQEIQSKAFSSIRSSCLNDSNDDDDDDEIVITHSKYRSLLPYISMIIKETFRKHPIALLGLPHVTTEDVEIDGYKIEAGTYIIQNIFSSHRSDKIFQSPNEFIPERFFESSQNQGLIHFGLGVRDCVGKSLAECEIFTLIATLLNRYQFINPNNSKKLNDIGTFGLAQVCPDTNIILKKRI.

The chain crosses the membrane as a helical span at residues 1-21 (MTSLTLYLIIFSIILYLFVNR). Cysteine 437 contributes to the heme binding site.

It belongs to the cytochrome P450 family. Heme serves as cofactor.

Its subcellular location is the membrane. The chain is Probable cytochrome P450 513A3 (cyp513A3) from Dictyostelium discoideum (Social amoeba).